A 677-amino-acid polypeptide reads, in one-letter code: Methionine--tRNA ligase (677 aa).

Residues 14–24 (PYANGSIHLGH) carry the 'HIGH' region motif. Zn(2+) is bound by residues Cys-145, Cys-148, Cys-158, and Cys-161. A 'KMSKS' region motif is present at residues 331–335 (KMSKS). Lys-334 provides a ligand contact to ATP. Positions 575–677 (AFAAVDLRIA…SGAKPGQRVK (103 aa)) constitute a tRNA-binding domain.

The protein belongs to the class-I aminoacyl-tRNA synthetase family. MetG type 1 subfamily. Homodimer. Zn(2+) serves as cofactor.

It localises to the cytoplasm. The catalysed reaction is tRNA(Met) + L-methionine + ATP = L-methionyl-tRNA(Met) + AMP + diphosphate. Its function is as follows. Is required not only for elongation of protein synthesis but also for the initiation of all mRNA translation through initiator tRNA(fMet) aminoacylation. This chain is Methionine--tRNA ligase, found in Pseudomonas aeruginosa (strain LESB58).